A 118-amino-acid polypeptide reads, in one-letter code: ATP synthase subunit g, mitochondrial (118 aa).

Belongs to the ATPase g subunit family. As to quaternary structure, F-type ATPases have 2 components, CF(1) - the catalytic core - and CF(0) - the membrane proton channel.

Its subcellular location is the mitochondrion membrane. In terms of biological role, mitochondrial membrane ATP synthase (F(1)F(0) ATP synthase or Complex V) produces ATP from ADP in the presence of a proton gradient across the membrane which is generated by electron transport complexes of the respiratory chain. F-type ATPases consist of two structural domains, F(1) - containing the extramembraneous catalytic core, and F(0) - containing the membrane proton channel, linked together by a central stalk and a peripheral stalk. During catalysis, ATP synthesis in the catalytic domain of F(1) is coupled via a rotary mechanism of the central stalk subunits to proton translocation. Part of the complex F(0) domain. Minor subunit located with subunit a in the membrane. This Schizosaccharomyces pombe (strain 972 / ATCC 24843) (Fission yeast) protein is ATP synthase subunit g, mitochondrial (atp20).